Reading from the N-terminus, the 212-residue chain is Imidazole glycerol phosphate synthase subunit HisH (212 aa).

One can recognise a Glutamine amidotransferase type-1 domain in the interval 3–212; it reads SIAVVDYGMG…LLSNFLKWTP (210 aa). Residue C82 is the Nucleophile of the active site. Residues H192 and E194 contribute to the active site.

As to quaternary structure, heterodimer of HisH and HisF.

It is found in the cytoplasm. The catalysed reaction is 5-[(5-phospho-1-deoxy-D-ribulos-1-ylimino)methylamino]-1-(5-phospho-beta-D-ribosyl)imidazole-4-carboxamide + L-glutamine = D-erythro-1-(imidazol-4-yl)glycerol 3-phosphate + 5-amino-1-(5-phospho-beta-D-ribosyl)imidazole-4-carboxamide + L-glutamate + H(+). The enzyme catalyses L-glutamine + H2O = L-glutamate + NH4(+). It participates in amino-acid biosynthesis; L-histidine biosynthesis; L-histidine from 5-phospho-alpha-D-ribose 1-diphosphate: step 5/9. In terms of biological role, IGPS catalyzes the conversion of PRFAR and glutamine to IGP, AICAR and glutamate. The HisH subunit catalyzes the hydrolysis of glutamine to glutamate and ammonia as part of the synthesis of IGP and AICAR. The resulting ammonia molecule is channeled to the active site of HisF. This chain is Imidazole glycerol phosphate synthase subunit HisH, found in Nitrosomonas europaea (strain ATCC 19718 / CIP 103999 / KCTC 2705 / NBRC 14298).